Reading from the N-terminus, the 479-residue chain is Glycerol-3-phosphate acyltransferase RAM2 (479 aa).

A run of 4 helical transmembrane segments spans residues 14–34 (YFAL…LVLA), 37–57 (LAGL…LIFA), 215–235 (SPLM…LACL), and 237–257 (IAAG…ALGV). Residues 284–289 (HRTLLD) carry the HXXXXD motif motif. N-linked (GlcNAc...) asparagine glycosylation is present at Asn-448.

This sequence belongs to the GPAT/DAPAT family.

It is found in the membrane. It catalyses the reaction sn-glycerol 3-phosphate + an acyl-CoA = a 1-acyl-sn-glycero-3-phosphate + CoA. Its pathway is lipid metabolism; glycerolipid metabolism. Its function is as follows. Involved in the production of cutin monomers. Esterifies acyl-group from acyl-ACP to the sn-2 position of glycerol-3-phosphate, a step in cutin biosynthesis. Required for colonization of the root by mycorrhizal fungi, and appropriate hyphopodia and arbuscule formation. Cutin monomers act as plant signals that promote colonization by arbuscular mycorrhizal fungi. This signaling function has been recruited by pathogenic oomycetes to facilitate appressoria formation and their own invasion. This chain is Glycerol-3-phosphate acyltransferase RAM2, found in Petunia hybrida (Petunia).